The chain runs to 488 residues: MRESFLDTIQHHFGHDPVWILVVGDLMLDRYLFGDVQRISPEAPVPVVLLKSQDERAGGAANVAANLAGLGIKTRIAGVIGQDAEAETLLGLMHDIGADTQHIHCSACRPTITKTRILGGHQQMMRLDQEDAAALSAEEQLALQTAIAAALTDRPAAIILSDYAKGVLSETLCQSIIAQATASGIPVLVDPKGRDYSKYHGATGLTPNKRETAEACHVAPHDDQALLAAAEQLRHTLKLDFLAVTRGEEGITVLDRQGSAHLAATARQVYDVSGAGDTVIATLTAGLAHGLPLHDAIELANIAAGIVVGKVGTVPINKAELEQELQSQQSAAQADKVCNLDSLLARVQNWRHQGERIVFTNGCFDLLHAGHVTYLEAARNTGDRLVLGLNTDRSVSALKGPSRPVIHEQDRARVLAALESVDAVILFDEDTPIDLINAIRPDVIAKGSDYTEDQVVGGAEVKSWGGKVALIDVVPGRSTSNIIRKLAS.

A ribokinase region spans residues 1–332 (MRESFLDTIQ…QELQSQQSAA (332 aa)). 208–211 (NKRE) contacts ATP. Asp-277 is a catalytic residue. Positions 359–488 (FTNGCFDLLH…TSNIIRKLAS (130 aa)) are cytidylyltransferase.

The protein in the N-terminal section; belongs to the carbohydrate kinase PfkB family. In the C-terminal section; belongs to the cytidylyltransferase family. In terms of assembly, homodimer.

The catalysed reaction is D-glycero-beta-D-manno-heptose 7-phosphate + ATP = D-glycero-beta-D-manno-heptose 1,7-bisphosphate + ADP + H(+). It catalyses the reaction D-glycero-beta-D-manno-heptose 1-phosphate + ATP + H(+) = ADP-D-glycero-beta-D-manno-heptose + diphosphate. The protein operates within nucleotide-sugar biosynthesis; ADP-L-glycero-beta-D-manno-heptose biosynthesis; ADP-L-glycero-beta-D-manno-heptose from D-glycero-beta-D-manno-heptose 7-phosphate: step 1/4. It functions in the pathway nucleotide-sugar biosynthesis; ADP-L-glycero-beta-D-manno-heptose biosynthesis; ADP-L-glycero-beta-D-manno-heptose from D-glycero-beta-D-manno-heptose 7-phosphate: step 3/4. In terms of biological role, catalyzes the phosphorylation of D-glycero-D-manno-heptose 7-phosphate at the C-1 position to selectively form D-glycero-beta-D-manno-heptose-1,7-bisphosphate. Its function is as follows. Catalyzes the ADP transfer from ATP to D-glycero-beta-D-manno-heptose 1-phosphate, yielding ADP-D-glycero-beta-D-manno-heptose. In Methylobacillus flagellatus (strain ATCC 51484 / DSM 6875 / VKM B-1610 / KT), this protein is Bifunctional protein HldE.